The following is a 273-amino-acid chain: Oligodendrocyte transcription factor 3 (273 aa).

Low complexity predominate over residues 1–14 (MNSDSSSVSSRASS). Residues 1-72 (MNSDSSSVSS…KAAGESSKYK (72 aa)) are disordered. Positions 24–34 (DHHHRHHHHHQ) are enriched in basic residues. The span at 37-47 (RLNSVSSTQGD) shows a compositional bias: polar residues. The stretch at 69-90 (SKYKIKKQLSEQDLQQLRLKIN) forms a coiled coil. Residues 84–138 (QLRLKINGRERKRMHDLNLAMDGLREVMPYAHGPSVRKLSKIATLLLARNYILML) form the bHLH domain.

Weakly expressed, mainly in non-neural tissues.

It localises to the nucleus. Functionally, may determine the distinct specification program of class A neurons in the dorsal part of the spinal cord and suppress specification of class B neurons. In Mus musculus (Mouse), this protein is Oligodendrocyte transcription factor 3 (Olig3).